A 230-amino-acid polypeptide reads, in one-letter code: Germin-like protein 5-1 (230 aa).

Positions 1 to 20 (MAMVGRSLLLLLLLVTLAAG) are cleaved as a signal peptide. Residues Cys-38 and Cys-53 are joined by a disulfide bond. Positions 86 to 219 (YGFTARSVDI…TLLTDEATVD (134 aa)) constitute a Cupin type-1 domain. Mn(2+) contacts are provided by His-119, His-121, Glu-126, and His-167. An N-linked (GlcNAc...) asparagine glycan is attached at Asn-172.

Belongs to the germin family. In terms of assembly, oligomer (believed to be a pentamer but probably hexamer).

The protein resides in the secreted. Its subcellular location is the extracellular space. The protein localises to the apoplast. Its function is as follows. May play a role in plant defense. Probably has no oxalate oxidase activity even if the active site is conserved. The protein is Germin-like protein 5-1 of Oryza sativa subsp. japonica (Rice).